The primary structure comprises 151 residues: Large ribosomal subunit protein bL9 (151 aa).

It belongs to the bacterial ribosomal protein bL9 family.

In terms of biological role, binds to the 23S rRNA. In Lactobacillus helveticus (strain DPC 4571), this protein is Large ribosomal subunit protein bL9.